The primary structure comprises 354 residues: Ferrochelatase (354 aa).

Residues H214 and E295 each coordinate Fe cation.

It belongs to the ferrochelatase family.

It is found in the cytoplasm. The enzyme catalyses heme b + 2 H(+) = protoporphyrin IX + Fe(2+). It functions in the pathway porphyrin-containing compound metabolism; protoheme biosynthesis; protoheme from protoporphyrin-IX: step 1/1. Functionally, catalyzes the ferrous insertion into protoporphyrin IX. In Burkholderia cenocepacia (strain HI2424), this protein is Ferrochelatase.